A 763-amino-acid polypeptide reads, in one-letter code: Ethylene receptor 2 (763 aa).

Transmembrane regions (helical) follow at residues 58-78 (FLIA…ATCS), 86-106 (IVLQ…ITMF), and 115-135 (VVLA…ATAI). Cu cation-binding residues include C97 and H101. A GAF domain is found at 190–339 (DRHTILYTTM…VVADQVAVAL (150 aa)). Residues 382–615 (AMYDGMRRPM…TIMLALQFQL (234 aa)) enclose the Histidine kinase domain. Positions 641 to 760 (QVILVDSDDT…ALGDELYRVL (120 aa)) constitute a Response regulatory domain. D692 is subject to 4-aspartylphosphate.

Belongs to the ethylene receptor family. Cu cation serves as cofactor. In terms of processing, autophosphorylated on serine, threonine and tyrosine residues.

The protein resides in the endoplasmic reticulum membrane. The catalysed reaction is ATP + protein L-histidine = ADP + protein N-phospho-L-histidine.. Its function is as follows. Ethylene receptor related to bacterial two-component regulators. Acts as a negative regulator of ethylene signaling. May delay the transition from the vegetative stage to the floral stage by up-regulating GI (GIGANTEA) and RCN1 and cause starch accumulation in stems by down-regulating the alpha-amylase AMY3D. The polypeptide is Ethylene receptor 2 (Oryza sativa subsp. japonica (Rice)).